The following is a 154-amino-acid chain: Large ribosomal subunit protein uL13 (154 aa).

Belongs to the universal ribosomal protein uL13 family. As to quaternary structure, part of the 50S ribosomal subunit.

Its function is as follows. This protein is one of the early assembly proteins of the 50S ribosomal subunit, although it is not seen to bind rRNA by itself. It is important during the early stages of 50S assembly. In Rhizobium leguminosarum bv. trifolii (strain WSM2304), this protein is Large ribosomal subunit protein uL13.